Consider the following 343-residue polypeptide: N-acetyl-gamma-glutamyl-phosphate reductase (343 aa).

Cys-147 is a catalytic residue.

This sequence belongs to the NAGSA dehydrogenase family. Type 1 subfamily.

Its subcellular location is the cytoplasm. It catalyses the reaction N-acetyl-L-glutamate 5-semialdehyde + phosphate + NADP(+) = N-acetyl-L-glutamyl 5-phosphate + NADPH + H(+). The protein operates within amino-acid biosynthesis; L-arginine biosynthesis; N(2)-acetyl-L-ornithine from L-glutamate: step 3/4. Its function is as follows. Catalyzes the NADPH-dependent reduction of N-acetyl-5-glutamyl phosphate to yield N-acetyl-L-glutamate 5-semialdehyde. In Listeria welshimeri serovar 6b (strain ATCC 35897 / DSM 20650 / CCUG 15529 / CIP 8149 / NCTC 11857 / SLCC 5334 / V8), this protein is N-acetyl-gamma-glutamyl-phosphate reductase.